Here is a 51-residue protein sequence, read N- to C-terminus: Lantibiotic streptococcin A-FF22 (51 aa).

The propeptide occupies methionine 1–alanine 25. 2 cross-links (beta-methyllanthionine (Thr-Cys)) span residues threonine 33–cysteine 38 and threonine 42–cysteine 50. A cross-link (lanthionine (Ser-Cys)) is located at residues serine 35 to cysteine 49. Residue threonine 48 is modified to 2,3-didehydrobutyrine.

It belongs to the type A lantibiotic family. In terms of processing, maturation of lantibiotics involves the enzymatic conversion of Thr, and Ser into dehydrated AA and the formation of thioether bonds with cysteine. This is followed by membrane translocation and cleavage of the modified precursor.

The protein localises to the secreted. Its subcellular location is the cell surface. Functionally, lanthionine-containing peptide antibiotic (lantibiotic) active on certain Gram-positive bacteria. The bactericidal activity of lantibiotics is based on depolarization of energized bacterial cytoplasmic membranes, initiated by the formation of aqueous transmembrane pores. The polypeptide is Lantibiotic streptococcin A-FF22 (scnA) (Streptococcus pyogenes).